Reading from the N-terminus, the 338-residue chain is tRNA N6-adenosine threonylcarbamoyltransferase (338 aa).

Residues His-111 and His-115 each coordinate Fe cation. Substrate is bound by residues 134 to 138 (LLSGG), Asp-167, Gly-180, and Asn-275. Asp-304 is a Fe cation binding site.

Belongs to the KAE1 / TsaD family. Requires Fe(2+) as cofactor.

The protein resides in the cytoplasm. The enzyme catalyses L-threonylcarbamoyladenylate + adenosine(37) in tRNA = N(6)-L-threonylcarbamoyladenosine(37) in tRNA + AMP + H(+). In terms of biological role, required for the formation of a threonylcarbamoyl group on adenosine at position 37 (t(6)A37) in tRNAs that read codons beginning with adenine. Is involved in the transfer of the threonylcarbamoyl moiety of threonylcarbamoyl-AMP (TC-AMP) to the N6 group of A37, together with TsaE and TsaB. TsaD likely plays a direct catalytic role in this reaction. The protein is tRNA N6-adenosine threonylcarbamoyltransferase of Leptospira interrogans serogroup Icterohaemorrhagiae serovar copenhageni (strain Fiocruz L1-130).